A 274-amino-acid chain; its full sequence is Adenosylcobinamide-GDP ribazoletransferase (274 aa).

7 consecutive transmembrane segments (helical) span residues 46 to 66, 69 to 89, 117 to 137, 151 to 173, 192 to 212, 216 to 236, and 253 to 273; these read VMASVPFIGIVLGIVGGAIAF, TSLGVASIVAATVIVCFWELF, IIADPATGLIGMGACLISILI, WWMVMITPMIGRFCAIFGAHSRL, HTIIAWLCVLLVICIGVPLAM, ELITITILGLLCSVTLALVEI, and FIMHSATALCALVFAVGVGIV.

It belongs to the CobS family. The cofactor is Mg(2+).

The protein resides in the cell membrane. The enzyme catalyses alpha-ribazole + adenosylcob(III)inamide-GDP = adenosylcob(III)alamin + GMP + H(+). It catalyses the reaction alpha-ribazole 5'-phosphate + adenosylcob(III)inamide-GDP = adenosylcob(III)alamin 5'-phosphate + GMP + H(+). It functions in the pathway cofactor biosynthesis; adenosylcobalamin biosynthesis; adenosylcobalamin from cob(II)yrinate a,c-diamide: step 7/7. Functionally, joins adenosylcobinamide-GDP and alpha-ribazole to generate adenosylcobalamin (Ado-cobalamin). Also synthesizes adenosylcobalamin 5'-phosphate from adenosylcobinamide-GDP and alpha-ribazole 5'-phosphate. The protein is Adenosylcobinamide-GDP ribazoletransferase of Corynebacterium diphtheriae (strain ATCC 700971 / NCTC 13129 / Biotype gravis).